The sequence spans 521 residues: Probable protein phosphatase 2C 16 (521 aa).

The 307-residue stretch at 21 to 327 (KYVVSSMQGW…ENTTVILVQF (307 aa)) folds into the PPM-type phosphatase domain. Positions 57, 58, 276, and 318 each coordinate Mn(2+). The tract at residues 354–431 (AAPAGASDTS…ADADDGAPKP (78 aa)) is disordered.

The protein belongs to the PP2C family. Mg(2+) serves as cofactor. The cofactor is Mn(2+).

It catalyses the reaction O-phospho-L-seryl-[protein] + H2O = L-seryl-[protein] + phosphate. It carries out the reaction O-phospho-L-threonyl-[protein] + H2O = L-threonyl-[protein] + phosphate. The chain is Probable protein phosphatase 2C 16 from Oryza sativa subsp. japonica (Rice).